A 345-amino-acid chain; its full sequence is Protein-glutamate methylesterase/protein-glutamine glutaminase 2 (345 aa).

The Response regulatory domain occupies 7–124 (KVLVVDDSPV…TADMLGYRSL (118 aa)). A 4-aspartylphosphate modification is found at aspartate 58. The region spanning 154 to 345 (STSQYQLIAI…LPQFLCDLLS (192 aa)) is the CheB-type methylesterase domain. Residues serine 166, histidine 192, and aspartate 289 contribute to the active site.

The protein belongs to the CheB family. Phosphorylated by CheA. Phosphorylation of the N-terminal regulatory domain activates the methylesterase activity.

The protein localises to the cytoplasm. The enzyme catalyses [protein]-L-glutamate 5-O-methyl ester + H2O = L-glutamyl-[protein] + methanol + H(+). The catalysed reaction is L-glutaminyl-[protein] + H2O = L-glutamyl-[protein] + NH4(+). Functionally, involved in chemotaxis. Part of a chemotaxis signal transduction system that modulates chemotaxis in response to various stimuli. Catalyzes the demethylation of specific methylglutamate residues introduced into the chemoreceptors (methyl-accepting chemotaxis proteins or MCP) by CheR. Also mediates the irreversible deamidation of specific glutamine residues to glutamic acid. This chain is Protein-glutamate methylesterase/protein-glutamine glutaminase 2, found in Vibrio vulnificus (strain YJ016).